We begin with the raw amino-acid sequence, 298 residues long: Probable 2-(5''-triphosphoribosyl)-3'-dephosphocoenzyme-A synthase 2 (298 aa).

Belongs to the CitG/MdcB family.

It carries out the reaction 3'-dephospho-CoA + ATP = 2'-(5''-triphospho-alpha-D-ribosyl)-3'-dephospho-CoA + adenine. The polypeptide is Probable 2-(5''-triphosphoribosyl)-3'-dephosphocoenzyme-A synthase 2 (Salmonella paratyphi A (strain ATCC 9150 / SARB42)).